The primary structure comprises 294 residues: Elongation factor Ts (294 aa).

The interval 82–85 (TDFV) is involved in Mg(2+) ion dislocation from EF-Tu.

It belongs to the EF-Ts family.

It is found in the cytoplasm. Associates with the EF-Tu.GDP complex and induces the exchange of GDP to GTP. It remains bound to the aminoacyl-tRNA.EF-Tu.GTP complex up to the GTP hydrolysis stage on the ribosome. This Psychrobacter cryohalolentis (strain ATCC BAA-1226 / DSM 17306 / VKM B-2378 / K5) protein is Elongation factor Ts.